Consider the following 476-residue polypeptide: Calcium/calmodulin-dependent protein kinase type 1G (476 aa).

Positions Phe23–Ile277 constitute a Protein kinase domain. Residues Leu29–Val37 and Lys52 each bind ATP. Asp143 acts as the Proton acceptor in catalysis. An autoinhibitory domain region spans residues Ile277–Met317. The segment at Lys297–Arg318 is calmodulin-binding. Residues Ser326–Arg387 form a disordered region.

This sequence belongs to the protein kinase superfamily. CAMK Ser/Thr protein kinase family. CaMK subfamily. In terms of processing, prenylated on Cys-473.

It is found in the cytoplasm. The protein localises to the golgi apparatus membrane. The protein resides in the cell membrane. It carries out the reaction L-seryl-[protein] + ATP = O-phospho-L-seryl-[protein] + ADP + H(+). The catalysed reaction is L-threonyl-[protein] + ATP = O-phospho-L-threonyl-[protein] + ADP + H(+). Its activity is regulated as follows. Activated by Ca(2+)/calmodulin. Binding of calmodulin is thought to result in a conformational change and leads to activation through phosphorylation by CAMKK1. In terms of biological role, calcium/calmodulin-dependent protein kinase belonging to a proposed calcium-triggered signaling cascade. In vitro phosphorylates transcription factor CREB1. The chain is Calcium/calmodulin-dependent protein kinase type 1G (Camk1g) from Rattus norvegicus (Rat).